We begin with the raw amino-acid sequence, 760 residues long: Metal transporter cnnm-2 (760 aa).

An N-terminal signal peptide occupies residues 1–21 (MIIKVFLRLLLLCAHIVCIDG). Residues 22–153 (KLEIRPVVSG…ETFMPVWAQC (132 aa)) are Extracellular-facing. Asparagine 88 is a glycosylation site (N-linked (GlcNAc...) asparagine). A CNNM transmembrane domain is found at 145–323 (TFMPVWAQCA…MENDACDIDL (179 aa)). The helical transmembrane segment at 154 to 174 (AILCLLFSISALCSGLTLGLM) threads the bilayer. Over 175 to 208 (ALTPQELSILMKSGSQREKKHAAAIYPIRCHGNR) the chain is Cytoplasmic. Residues 209 to 229 (LLCTVIIMNVIVNTGITLLFD) form a helical membrane-spanning segment. Aspartate 230 is a topological domain (extracellular). A helical membrane pass occupies residues 231–251 (LAEGLIAFVASTVGIVVFGEI). The Cytoplasmic portion of the chain corresponds to 252–261 (LPQSICVKYG). Residues 262–282 (LAVGANTIFITKFFMFLLFPI) traverse the membrane as a helical segment. At 283-760 (TWPLGKILDK…SVEELKPLME (478 aa)) the chain is on the extracellular side. N-linked (GlcNAc...) asparagine glycans are attached at residues asparagine 302 and asparagine 403. 2 consecutive CBS domains span residues 344-406 (MTDI…NITV) and 442-512 (MVAK…ITDE). Residues asparagine 528, asparagine 592, and asparagine 667 are each glycosylated (N-linked (GlcNAc...) asparagine). Residues 708–734 (DDFGSPTRKASILDSSPNSRKRSSTSV) form a disordered region.

This sequence belongs to the ACDP family.

The protein localises to the cell membrane. Its function is as follows. Probable metal transporter. Probably acts redundantly with the other metal transport proteins cnnm-1, cnnm-3, cnnm-4 and cnnm-5 to regulate Mg(2+) homeostasis. In Caenorhabditis elegans, this protein is Metal transporter cnnm-2.